A 385-amino-acid polypeptide reads, in one-letter code: ATP phosphoribosyltransferase regulatory subunit (385 aa).

It belongs to the class-II aminoacyl-tRNA synthetase family. HisZ subfamily. In terms of assembly, heteromultimer composed of HisG and HisZ subunits.

It localises to the cytoplasm. It functions in the pathway amino-acid biosynthesis; L-histidine biosynthesis; L-histidine from 5-phospho-alpha-D-ribose 1-diphosphate: step 1/9. Functionally, required for the first step of histidine biosynthesis. May allow the feedback regulation of ATP phosphoribosyltransferase activity by histidine. In Laribacter hongkongensis (strain HLHK9), this protein is ATP phosphoribosyltransferase regulatory subunit.